The chain runs to 132 residues: Small ribosomal subunit protein uS8 (132 aa).

This sequence belongs to the universal ribosomal protein uS8 family. As to quaternary structure, part of the 30S ribosomal subunit. Contacts proteins S5 and S12.

One of the primary rRNA binding proteins, it binds directly to 16S rRNA central domain where it helps coordinate assembly of the platform of the 30S subunit. This chain is Small ribosomal subunit protein uS8, found in Corynebacterium efficiens (strain DSM 44549 / YS-314 / AJ 12310 / JCM 11189 / NBRC 100395).